The following is a 1761-amino-acid chain: 6-methylsalicylic acid synthase AOL_s00215g283 (1761 aa).

One can recognise a Ketosynthase family 3 (KS3) domain in the interval 18–443 (QDDIAIIGMA…GTVAHAVIEQ (426 aa)). Residues C190, H325, and H367 each act as for beta-ketoacyl synthase activity in the active site. The malonyl-CoA:ACP transacylase (MAT) domain stretch occupies residues 554–870 (VWVFSGHGAH…ALGKLHCHGA (317 aa)). S641 (for malonyltransferase activity) is an active-site residue. The tract at residues 918–1038 (HVLLGAKHQV…GHVANNEWSK (121 aa)) is N-terminal hotdog fold. The segment at 918 to 1187 (HVLLGAKHQV…NGMRFSAVEG (270 aa)) is dehydratase (DH) domain. Positions 918–1191 (HVLLGAKHQV…FSAVEGTPGA (274 aa)) constitute a PKS/mFAS DH domain. H950 serves as the catalytic Proton acceptor; for dehydratase activity. Positions 1050–1191 (LPSVKPSFAT…FSAVEGTPGA (142 aa)) are C-terminal hotdog fold. The active-site Proton donor; for dehydratase activity is the D1113. The interval 1399-1587 (GTYLITGGLG…IVSFLWTSWN (189 aa)) is ketoreductase (KR) domain. The interval 1654–1680 (PRKRAESSGTEAVSKGEVSEKAPVPKS) is disordered. In terms of domain architecture, Carrier spans 1686–1761 (EYLQNAISEC…HLVKWFEEKI (76 aa)). Residue S1721 is modified to O-(pantetheine 4'-phosphoryl)serine.

The catalysed reaction is 3 malonyl-CoA + acetyl-CoA + NADPH + 3 H(+) = 6-methylsalicylate + 3 CO2 + NADP(+) + 4 CoA + H2O. It functions in the pathway secondary metabolite biosynthesis; terpenoid biosynthesis. 6-methylsalicylic acid synthase; part of the gene cluster that mediates the biosynthesis of sesquiterpenyl epoxy-cyclohexenoids (SECs) such as anthrobotrisins and arthrosporols, metabolites that possess a novel hybrid carbon skeleton consisting of a polyketide-derived epoxycyclohexenol combined with a terpenoid-derived monocyclic sesquiterpenol substructure (PKS-PTS hybrid). The SEC pathway plays an important role for fungal soil colonization via decreasing fungal nematode-capturing ability. Within the pathway, the polyketide synthase (PKS) AOL_s00215g283 catalyzes the biosynthesis of 6-methylsalicylic acid (6-MSA) via condensation of 1 acetate and 3 malonate units. AOL_s00215g283 performs a series of programmed reactions including Claisen condensation, dehydration, reduction, and cyclization to yield 6-MSA. The pathway begins with the biosynthesis of 6-methylsalicylic acid (6-MSA), the first precursor of the polyketide-derived epoxycyclohexenol in arthrosporols, by the polyketide synthase (PKS) AOL_s00215g283. The 6-methylsalicylic acid decarboxylase AOL_s00215g281 then catalyzes the decarboxylation of 6-methylsalicylic acid to yield m-cresol. The cytochrome P450 monooxygenase AOL_s00215g282 further oxidizes m-cresol to yield toluquinol. With the assistance of the oxidoreductase AOL_s00215g277, the polyprenyl transferase AOL_s00215g276 catalyzes the farnesylation of toluquinol to produce farnesyl hydroquinone, the hybrid precursor for biosynthesis of SECs. Farnesyl hydroquinone undergoes epoxidation and then subsequent dehydrogenation to form farnesyl epoxy-quinone, the first and simplest SEC. The cytochrome P450 monooxygenase AOL_s00215g278 and the FAD-dependent monooxygenase AOL_s00215g279 might be involved in the oxygenation of the phenol moiety, most likely in the epoxy formation. The cytochrome P450 monooxygenases AOL_s00215g274 and AOL_s00215g280 are involved in specific regional ketone reductions at respectively C-4 and C-1 of farnesyl epoxy-quinone PubMed:33823587. The polypeptide is 6-methylsalicylic acid synthase AOL_s00215g283 (Arthrobotrys oligospora (strain ATCC 24927 / CBS 115.81 / DSM 1491) (Nematode-trapping fungus)).